Consider the following 1148-residue polypeptide: Phospholipid-transporting ATPase IB (1148 aa).

Topologically, residues Met1–Leu44 are cytoplasmic. The residue at position 5 (Thr5) is a Phosphothreonine. The chain crosses the membrane as a helical span at residues Pro45–Leu66. The Exoplasmic loop segment spans residues Gln67–Asp71. Residues Val72 to Lys94 form a helical membrane-spanning segment. At Glu95 to Gln276 the chain is on the cytoplasmic side. The helical transmembrane segment at Ile277–Trp298 threads the bilayer. Residues Asn299 to Leu323 are Exoplasmic loop-facing. Residues Leu324–Val345 form a helical membrane-spanning segment. The Cytoplasmic segment spans residues Lys346–Lys837. The 4-aspartylphosphate intermediate role is filled by Asp388. ATP is bound by residues Asp388, Lys389, Thr390, Glu488, Phe529, Lys552, Arg585, Thr665, Gly666, Asp667, Arg755, and Lys761. Asp388 is a Mg(2+) binding site. Position 390 (Thr390) interacts with Mg(2+). Mg(2+) is bound at residue Asp781. The ATP site is built by Asn784 and Asp785. Residue Asp785 coordinates Mg(2+). A helical transmembrane segment spans residues Cys838–Phe858. At Val859–Arg870 the chain is on the exoplasmic loop side. A helical transmembrane segment spans residues Trp871–Ile890. Topologically, residues Phe891–Val920 are cytoplasmic. A helical membrane pass occupies residues Phe921–Ala942. Residues Leu943–Asp956 lie on the Exoplasmic loop side of the membrane. A helical membrane pass occupies residues Tyr957–Glu979. The Cytoplasmic portion of the chain corresponds to Thr980–Lys985. The helical transmembrane segment at Phe986–Ser1006 threads the bilayer. Over Thr1007 to Met1024 the chain is Exoplasmic loop. The chain crosses the membrane as a helical span at residues Val1025 to Trp1049. Residues Arg1050 to Lys1148 are Cytoplasmic-facing.

The protein belongs to the cation transport ATPase (P-type) (TC 3.A.3) family. Type IV subfamily. In terms of assembly, component of a P4-ATPase flippase complex which consists of a catalytic alpha subunit and an accessory beta subunit. Interacts with TMEM30A to form a flippase complex. Mg(2+) serves as cofactor. As to expression, found in testis, heart and brain. Most abundant in testis. Also detected in fetal tissues. Expressed in retinal photoreceptor cells; detected in retina outer nuclear layer and inner segment (at protein level).

It is found in the membrane. The protein resides in the golgi apparatus membrane. Its subcellular location is the endosome membrane. The protein localises to the cell membrane. It localises to the photoreceptor outer segment membrane. It is found in the photoreceptor inner segment membrane. The enzyme catalyses ATP + H2O + phospholipidSide 1 = ADP + phosphate + phospholipidSide 2.. The catalysed reaction is a 1,2-diacyl-sn-glycero-3-phospho-L-serine(out) + ATP + H2O = a 1,2-diacyl-sn-glycero-3-phospho-L-serine(in) + ADP + phosphate + H(+). It carries out the reaction a 1,2-diacyl-sn-glycero-3-phosphoethanolamine(in) + ATP + H2O = a 1,2-diacyl-sn-glycero-3-phosphoethanolamine(out) + ADP + phosphate + H(+). In terms of biological role, catalytic component of a P4-ATPase flippase complex which catalyzes the hydrolysis of ATP coupled to the transport of aminophospholipids from the outer to the inner leaflet of various membranes and ensures the maintenance of asymmetric distribution of phospholipids. Able to translocate phosphatidylserine, but not phosphatidylcholine. Phospholipid translocation also seems to be implicated in vesicle formation and in uptake of lipid signaling molecules. Reconstituted to liposomes, the ATP8A2:TMEM30A flippase complex predominantly transports phosphatidylserine (PS) and to a lesser extent phosphatidylethanolamine (PE). Phospholipid translocation is not associated with a countertransport of an inorganic ion or other charged substrate from the cytoplasmic side toward the exoplasm in connection with the phosphorylation from ATP. ATP8A2:TMEM30A may be involved in regulation of neurite outgrowth. Proposed to function in the generation and maintenance of phospholipid asymmetry in photoreceptor disk membranes and neuronal axon membranes. May be involved in vesicle trafficking in neuronal cells. Required for normal visual and auditory function; involved in photoreceptor and inner ear spiral ganglion cell survival. The sequence is that of Phospholipid-transporting ATPase IB from Mus musculus (Mouse).